Reading from the N-terminus, the 379-residue chain is Adenylosuccinate synthetase (379 aa).

GTP contacts are provided by residues 11–17 (GDEGKGK) and 39–41 (GHT). Aspartate 12 (proton acceptor) is an active-site residue. Residues aspartate 12 and glycine 39 each contribute to the Mg(2+) site. IMP contacts are provided by residues 12-15 (DEGK), 37-40 (NAGH), threonine 127, arginine 141, glutamine 223, threonine 238, and arginine 302. Histidine 40 functions as the Proton donor in the catalytic mechanism. 298–304 (TTTGRGR) contributes to the substrate binding site. GTP is bound by residues arginine 304 and 330–332 (KLD).

This sequence belongs to the adenylosuccinate synthetase family. In terms of assembly, homodimer. Requires Mg(2+) as cofactor.

It is found in the cytoplasm. The catalysed reaction is IMP + L-aspartate + GTP = N(6)-(1,2-dicarboxyethyl)-AMP + GDP + phosphate + 2 H(+). Its pathway is purine metabolism; AMP biosynthesis via de novo pathway; AMP from IMP: step 1/2. Functionally, plays an important role in the de novo pathway of purine nucleotide biosynthesis. Catalyzes the first committed step in the biosynthesis of AMP from IMP. This Methanosarcina mazei (strain ATCC BAA-159 / DSM 3647 / Goe1 / Go1 / JCM 11833 / OCM 88) (Methanosarcina frisia) protein is Adenylosuccinate synthetase.